Reading from the N-terminus, the 300-residue chain is tRNA dimethylallyltransferase (300 aa).

11-18 (GPTAVGKS) provides a ligand contact to ATP. A substrate-binding site is contributed by 13-18 (TAVGKS). Positions 35–38 (DSVQ) are interaction with substrate tRNA.

It belongs to the IPP transferase family. In terms of assembly, monomer. Mg(2+) is required as a cofactor.

It carries out the reaction adenosine(37) in tRNA + dimethylallyl diphosphate = N(6)-dimethylallyladenosine(37) in tRNA + diphosphate. In terms of biological role, catalyzes the transfer of a dimethylallyl group onto the adenine at position 37 in tRNAs that read codons beginning with uridine, leading to the formation of N6-(dimethylallyl)adenosine (i(6)A). The polypeptide is tRNA dimethylallyltransferase (Borrelia hermsii (strain HS1 / DAH)).